Here is a 156-residue protein sequence, read N- to C-terminus: Small ribosomal subunit protein uS7 (156 aa).

The protein belongs to the universal ribosomal protein uS7 family. As to quaternary structure, part of the 30S ribosomal subunit. Contacts proteins S9 and S11.

In terms of biological role, one of the primary rRNA binding proteins, it binds directly to 16S rRNA where it nucleates assembly of the head domain of the 30S subunit. Is located at the subunit interface close to the decoding center, probably blocks exit of the E-site tRNA. The sequence is that of Small ribosomal subunit protein uS7 from Cutibacterium acnes (strain DSM 16379 / KPA171202) (Propionibacterium acnes).